Consider the following 228-residue polypeptide: Superoxide dismutase [Mn], mitochondrial (228 aa).

The transit peptide at 1–24 directs the protein to the mitochondrion; that stretch reads MALRNLMTKKPFAGILTFRQQLRC. Mn(2+)-binding residues include His52, His100, Asp189, and His193.

Belongs to the iron/manganese superoxide dismutase family. Homotetramer. It depends on Mn(2+) as a cofactor.

The protein localises to the mitochondrion matrix. It catalyses the reaction 2 superoxide + 2 H(+) = H2O2 + O2. Functionally, destroys superoxide anion radicals which are normally produced within the cells and which are toxic to biological systems. The chain is Superoxide dismutase [Mn], mitochondrial (SODA) from Capsicum annuum (Capsicum pepper).